The chain runs to 249 residues: Probable transcriptional regulatory protein Sare_1779 (249 aa).

It belongs to the TACO1 family.

It localises to the cytoplasm. In Salinispora arenicola (strain CNS-205), this protein is Probable transcriptional regulatory protein Sare_1779.